Reading from the N-terminus, the 370-residue chain is NADH-quinone oxidoreductase subunit D (370 aa).

It belongs to the complex I 49 kDa subunit family. In terms of assembly, NDH-1 is composed of 14 different subunits. Subunits NuoB, C, D, E, F, and G constitute the peripheral sector of the complex.

It is found in the cell membrane. The enzyme catalyses a quinone + NADH + 5 H(+)(in) = a quinol + NAD(+) + 4 H(+)(out). In terms of biological role, NDH-1 shuttles electrons from NADH, via FMN and iron-sulfur (Fe-S) centers, to quinones in the respiratory chain. The immediate electron acceptor for the enzyme in this species is believed to be a menaquinone. Couples the redox reaction to proton translocation (for every two electrons transferred, four hydrogen ions are translocated across the cytoplasmic membrane), and thus conserves the redox energy in a proton gradient. The polypeptide is NADH-quinone oxidoreductase subunit D (Desulfitobacterium hafniense (strain Y51)).